The chain runs to 81 residues: Protein L83L (81 aa).

The segment at 1–28 (MDTSLKNNDGALDADNKNYQDYKDEPDK) is disordered. The segment covering 14–28 (ADNKNYQDYKDEPDK) has biased composition (basic and acidic residues).

The protein belongs to the asfivirus L83L family. As to quaternary structure, interacts with host IL1B.

Its subcellular location is the host cytoplasm. May subvert the host innate immune response by interacting with host IL1B and interfering with its function. In African swine fever virus (isolate Tick/South Africa/Pretoriuskop Pr4/1996) (ASFV), this protein is Protein L83L.